Reading from the N-terminus, the 837-residue chain is Autophagy-related protein 13 (837 aa).

Over residues 302–336 the composition is skewed to basic and acidic residues; the sequence is LKIDRDSTTNEKVNEPEDDESHHADVESSQEHLQS. 4 disordered regions span residues 302–400, 446–540, 631–704, and 793–837; these read LKID…QRPT, RNPR…MNDT, QLSG…TNSN, and ANAP…LAKH. Polar residues predominate over residues 358 to 400; the sequence is SISNNASMSLSPCSSGPQTVTEDSPSHNKPSANTTPIVSQRPT. The segment covering 450 to 475 has biased composition (low complexity); sequence SSTSSTNTTANIPIANNNSNNQYNST. Positions 476 to 486 are enriched in polar residues; the sequence is FPRSVSSSHGS. The segment covering 509 to 523 has biased composition (low complexity); sequence RFSSSFGSRASRRFS. Polar residues-rich tracts occupy residues 524–538, 658–680, 688–704, and 796–812; these read NTSGRQSSLPSGNMN, YDNSHLPSINSKLRENSSTSGND, GTPSSRKNSFDYSTNSN, and PKSNTNSRSLKSSTNPP. Over residues 815-825 the composition is skewed to acidic residues; that stretch reads GEDDDDDDDDL.

This sequence belongs to the ATG13 family. Fungi subfamily. As to quaternary structure, interacts with ATG1 to form the ATG1-ATG13 kinase complex.

It localises to the cytoplasm. It is found in the preautophagosomal structure. Functionally, activates the ATG1 kinase in a nutritional condition dependent manner through the TOR pathway, leading to autophagy. Also involved in cytoplasm to vacuole transport (Cvt) and more specifically in Cvt vesicle formation. Seems to play a role in the switching machinery regulating the conversion between the Cvt pathway and autophagy. Finally, ATG13 is also required for glycogen storage during stationary phase. This Debaryomyces hansenii (strain ATCC 36239 / CBS 767 / BCRC 21394 / JCM 1990 / NBRC 0083 / IGC 2968) (Yeast) protein is Autophagy-related protein 13 (ATG13).